The following is a 312-amino-acid chain: MSVIDVNPIPLAPRISEAGVADYIALLKPRVMSLVVFTALVGLLMAPGSFHPVLAITAIICIAVGGGAAGALNMWYEDDIDAKMTRTANRPIPRGRVTRPEALTFGMTLAFFSVVTLGILVNWIAAGLLAFTIFFYVVIYTMWLKRWTAQNIVIGGAAGALPPVVAWASVTGSLAVEPILLFLIIFFWTPPHFWALALFRNDDYARAGVPMLPVVAGPDHTRLQILLYTVALVAVAAAPWPLGYFDVIYGVASLALGGWMLVLAVRVYRHRSGSAALRATRNLFKFSILYLFALFAILLVEVVAAAVLRLIG.

8 consecutive transmembrane segments (helical) span residues 31 to 51 (VMSL…GSFH), 52 to 72 (PVLA…AGAL), 119 to 139 (ILVN…YVVI), 152 to 172 (IVIG…SVTG), 179 to 199 (ILLF…LALF), 225 to 245 (ILLY…LGYF), 247 to 267 (VIYG…AVRV), and 288 to 308 (ILYL…AAVL).

Belongs to the UbiA prenyltransferase family. Protoheme IX farnesyltransferase subfamily.

The protein resides in the cell inner membrane. It carries out the reaction heme b + (2E,6E)-farnesyl diphosphate + H2O = Fe(II)-heme o + diphosphate. It functions in the pathway porphyrin-containing compound metabolism; heme O biosynthesis; heme O from protoheme: step 1/1. Its function is as follows. Converts heme B (protoheme IX) to heme O by substitution of the vinyl group on carbon 2 of heme B porphyrin ring with a hydroxyethyl farnesyl side group. This Rhodopseudomonas palustris (strain ATCC BAA-98 / CGA009) protein is Protoheme IX farnesyltransferase.